The primary structure comprises 243 residues: Tubulin-folding cofactor B (243 aa).

In terms of domain architecture, CAP-Gly spans 181-223; that stretch reads RAESLGPGYWVGIQYDEPLGKHDGMVKGTRFFECPRLQGGMVR.

Belongs to the TBCB family. Supercomplex made of cofactors A to E. Cofactors A and D function by capturing and stabilizing tubulin in a quasi-native conformation. Cofactor E binds to the cofactor D-tubulin complex; interaction with cofactor C then causes the release of tubulin polypeptides that are committed to the native state. Interacts with TUBA6. As to expression, expressed in roots, stems, leaves, flowers and siliques.

The protein resides in the cytoplasm. Functionally, involved in control of cell division. Regulates probably the availability of alpha-tubulin for dimerization of alpha-/beta-tubulin, which is required for proper microtubule biogenesis. Decreased expression of TFCB results in enlarged mesophyll cells and leaf epidermal cells with bulged nuclei, increased ploidy and increased numbers of spindles and phragmoplasts. This chain is Tubulin-folding cofactor B (TFCB), found in Arabidopsis thaliana (Mouse-ear cress).